Consider the following 475-residue polypeptide: UDP-N-acetylmuramate--L-alanine ligase (475 aa).

125–131 contributes to the ATP binding site; that stretch reads GTHGKTT.

It belongs to the MurCDEF family.

It is found in the cytoplasm. The catalysed reaction is UDP-N-acetyl-alpha-D-muramate + L-alanine + ATP = UDP-N-acetyl-alpha-D-muramoyl-L-alanine + ADP + phosphate + H(+). The protein operates within cell wall biogenesis; peptidoglycan biosynthesis. In terms of biological role, cell wall formation. The polypeptide is UDP-N-acetylmuramate--L-alanine ligase (Actinobacillus pleuropneumoniae serotype 7 (strain AP76)).